The sequence spans 55 residues: Ferredoxin (55 aa).

4Fe-4S ferredoxin-type domains lie at 2-27 (HIIT…HEGT) and 28-55 (GKYE…VKAE). 8 residues coordinate [4Fe-4S] cluster: C8, C11, C14, C18, C37, C40, C43, and C47.

[4Fe-4S] cluster serves as cofactor.

In terms of biological role, ferredoxins are iron-sulfur proteins that transfer electrons in a wide variety of metabolic reactions. The polypeptide is Ferredoxin (Thermoanaerobacterium thermosaccharolyticum (Clostridium thermosaccharolyticum)).